The following is a 343-amino-acid chain: Phospholipid phosphatase-related protein type 2 (343 aa).

3 helical membrane passes run 12–32 (FSII…VVLL), 72–92 (ALIY…GELA), and 129–149 (FLGV…AGQV). Asparagine 165 carries N-linked (GlcNAc...) asparagine glycosylation. The next 3 helical transmembrane spans lie at 210–230 (AALC…VFRV), 239–259 (SLCL…VAEY), and 266–286 (VLAG…CVVH). The segment at 291–343 (RPHSGRRLSPWEDLSQAPTMDSPLEKNPRPAGRIRHRHGSPHPSRRTVPAVAT) is disordered. 2 positions are modified to phosphoserine: serine 299 and serine 312. The span at 322–335 (GRIRHRHGSPHPSR) shows a compositional bias: basic residues.

It belongs to the PA-phosphatase related phosphoesterase family.

It localises to the membrane. The sequence is that of Phospholipid phosphatase-related protein type 2 from Mus musculus (Mouse).